The following is a 47-amino-acid chain: uncharacterized protein (47 aa).

The interval phenylalanine 24 to isoleucine 47 is disordered.

This is an uncharacterized protein from Mycobacterium tuberculosis (strain ATCC 25618 / H37Rv).